The sequence spans 329 residues: 3-dehydroquinate synthase (329 aa).

The protein belongs to the archaeal-type DHQ synthase family.

It catalyses the reaction 2-amino-2,3,7-trideoxy-D-lyxo-hept-6-ulosonate + NAD(+) + H2O = 3-dehydroquinate + NH4(+) + NADH + H(+). Its function is as follows. Catalyzes the oxidative deamination and cyclization of 2-amino-3,7-dideoxy-D-threo-hept-6-ulosonic acid (ADH) to yield 3-dehydroquinate (DHQ), which is fed into the canonical shikimic pathway of aromatic amino acid biosynthesis. The polypeptide is 3-dehydroquinate synthase (Methanoregula boonei (strain DSM 21154 / JCM 14090 / 6A8)).